Reading from the N-terminus, the 206-residue chain is Adenylyl-sulfate kinase (206 aa).

31-38 contacts ATP; the sequence is GLSASGKS. The active-site Phosphoserine intermediate is the serine 105.

This sequence belongs to the APS kinase family.

It catalyses the reaction adenosine 5'-phosphosulfate + ATP = 3'-phosphoadenylyl sulfate + ADP + H(+). It functions in the pathway sulfur metabolism; hydrogen sulfide biosynthesis; sulfite from sulfate: step 2/3. Its function is as follows. Catalyzes the synthesis of activated sulfate. This is Adenylyl-sulfate kinase (sD) from Emericella nidulans (strain FGSC A4 / ATCC 38163 / CBS 112.46 / NRRL 194 / M139) (Aspergillus nidulans).